A 556-amino-acid chain; its full sequence is Myb/SANT-like DNA-binding domain-containing protein 2 (556 aa).

2 stretches are compositionally biased toward polar residues: residues 1–10 (MAASCGSSQL) and 36–45 (GNPSLSDPST). Residues 1–82 (MAASCGSSQL…GGASPSVSFS (82 aa)) are disordered. A compositionally biased stretch (gly residues) spans 56–74 (PAAGGAGLGGGGAAGGRGG). The Myb-like domain occupies 99–169 (SWTPAETNAL…QCRERIKTLR (71 aa)). The disordered stretch occupies residues 431–458 (PRSPLAEPRGADPSNETPGELEVPSPQA).

This is Myb/SANT-like DNA-binding domain-containing protein 2 (MSANTD2) from Gallus gallus (Chicken).